The primary structure comprises 198 residues: ATP-dependent Clp protease proteolytic subunit (198 aa).

Catalysis depends on Ser-98, which acts as the Nucleophile. His-123 is an active-site residue.

It belongs to the peptidase S14 family. As to quaternary structure, fourteen ClpP subunits assemble into 2 heptameric rings which stack back to back to give a disk-like structure with a central cavity, resembling the structure of eukaryotic proteasomes.

Its subcellular location is the cytoplasm. The catalysed reaction is Hydrolysis of proteins to small peptides in the presence of ATP and magnesium. alpha-casein is the usual test substrate. In the absence of ATP, only oligopeptides shorter than five residues are hydrolyzed (such as succinyl-Leu-Tyr-|-NHMec, and Leu-Tyr-Leu-|-Tyr-Trp, in which cleavage of the -Tyr-|-Leu- and -Tyr-|-Trp bonds also occurs).. In terms of biological role, cleaves peptides in various proteins in a process that requires ATP hydrolysis. Has a chymotrypsin-like activity. Plays a major role in the degradation of misfolded proteins. The sequence is that of ATP-dependent Clp protease proteolytic subunit from Bacillus pumilus (strain SAFR-032).